A 360-amino-acid chain; its full sequence is Aminomethyltransferase (360 aa).

This sequence belongs to the GcvT family. The glycine cleavage system is composed of four proteins: P, T, L and H.

It carries out the reaction N(6)-[(R)-S(8)-aminomethyldihydrolipoyl]-L-lysyl-[protein] + (6S)-5,6,7,8-tetrahydrofolate = N(6)-[(R)-dihydrolipoyl]-L-lysyl-[protein] + (6R)-5,10-methylene-5,6,7,8-tetrahydrofolate + NH4(+). In terms of biological role, the glycine cleavage system catalyzes the degradation of glycine. The sequence is that of Aminomethyltransferase from Pseudomonas syringae pv. tomato (strain ATCC BAA-871 / DC3000).